The following is a 354-amino-acid chain: MRLEKGMKIKDTLKIMCPGTQLREGLENILRAKTGGLIVIGDNKEVMDTVDGGFNLNSDYSPSYVYELAKMDGAIVISEDLKKIVCANAQLIPDPSIVTHETGTRHRTAHRIAKQTNNIVIAISQRRNIITVYKGDIKYVLRDSSVILARANQAIQTLEKYVSVLERVINNLNLLEFQDLTTLFDVVTAIQRTEMVMRIVEEINMYILELGNEGRLISMQLNELVKHIERDGILLIRDYCKDEDGHNEVYEQIQKLSATELLDLDAIARVLGHAGESLVDTLISAKGYRILGKVPRIPSTVIENLIKEFKELNSVIEADIDELDIVEGIGEARAKAIKDGLKRIREQILLNKKI.

The 139-residue stretch at Gly6–Ser144 folds into the DAC domain. Residues Gly73, Leu91, and Thr104–Thr108 each bind ATP.

Belongs to the DisA family. In terms of assembly, homooctamer. Requires Mg(2+) as cofactor.

The enzyme catalyses 2 ATP = 3',3'-c-di-AMP + 2 diphosphate. In terms of biological role, participates in a DNA-damage check-point that is active prior to asymmetric division when DNA is damaged. DisA forms globular foci that rapidly scan along the chromosomes during sporulation, searching for lesions. When a lesion is present, DisA pauses at the lesion site. This triggers a cellular response that culminates in a temporary block in sporulation initiation. Functionally, also has diadenylate cyclase activity, catalyzing the condensation of 2 ATP molecules into cyclic di-AMP (c-di-AMP). c-di-AMP acts as a signaling molecule that couples DNA integrity with progression of sporulation. The rise in c-di-AMP level generated by DisA while scanning the chromosome, operates as a positive signal that advances sporulation; upon encountering a lesion, the DisA focus arrests at the damaged site and halts c-di-AMP synthesis. This chain is DNA integrity scanning protein DisA, found in Clostridium botulinum (strain Eklund 17B / Type B).